The sequence spans 1248 residues: Kinesin-like protein KIN-14I (1248 aa).

Residues Phe88–Leu244 form the MyTH4 domain. In terms of domain architecture, FERM spans Leu249–Tyr563. The stretch at Asn586–Glu659 forms a coiled coil. The interval Glu675–Thr704 is disordered. The span at Lys679–Ser693 shows a compositional bias: polar residues. Residues Val708–Thr799 adopt a coiled-coil conformation. In terms of domain architecture, Kinesin motor spans Lys872–Ile1193. Residue Gly953 to Thr960 coordinates ATP. The tract at residues Val1201–Arg1223 is calmodulin-binding. The segment at Ala1220 to Ser1248 is disordered. The span at Glu1234–Ser1248 shows a compositional bias: basic and acidic residues.

The protein belongs to the TRAFAC class myosin-kinesin ATPase superfamily. Kinesin family. KIN-14 subfamily. In terms of assembly, binds microtubules via its N-terminus containing the MyTH4 domain and binds F-actin via its FERM domain. Binding to calmodulin inhibits microtubule binding activity.

Its subcellular location is the cytoplasm. The protein resides in the cytoskeleton. Its function is as follows. Minus-end microtubule-dependent motor protein involved in the regulation of cell division. This Oryza sativa subsp. japonica (Rice) protein is Kinesin-like protein KIN-14I.